The chain runs to 221 residues: LHFPL tetraspan subfamily member 5 protein (221 aa).

At 1–24 (MPKLLPAQEAARIYHTNYVRNARA) the chain is on the cytoplasmic side. Residues 25-45 (MGVLWALFTLCFSILMVVTFI) traverse the membrane as a helical segment. Over 46–98 (QPYWIGDSIDTPQAGYFGLFSYCIGNALTGELICKGSPLDFGTIPSSAFKTAM) the chain is Extracellular. Residues 99 to 119 (FFVGISTFLIIGSILCFSLFF) form a helical membrane-spanning segment. The Cytoplasmic portion of the chain corresponds to 120-128 (FCNAATVYK). Residues 129-149 (VCAWMQLAAATGLMIGCLIYP) traverse the membrane as a helical segment. Over 150–179 (DGWDSSEVKRMCGDKTDKYTLGACTVRWAY) the chain is Extracellular. Residues 180 to 200 (ILCIIGILDALILSFLAFVLG) traverse the membrane as a helical segment. Residues 201–221 (NRQDNLLPSDFKVESKEEGNE) are Cytoplasmic-facing.

The protein belongs to the LHFP family.

The protein localises to the cell membrane. Its function is as follows. Probable component of the mechanotransducer (MET) non-specific cation channel complex. This chain is LHFPL tetraspan subfamily member 5 protein, found in Gallus gallus (Chicken).